Consider the following 249-residue polypeptide: tRNA pseudouridine synthase A (249 aa).

Asp-52 acts as the Nucleophile in catalysis. A substrate-binding site is contributed by Tyr-111.

Belongs to the tRNA pseudouridine synthase TruA family. As to quaternary structure, homodimer.

The enzyme catalyses uridine(38/39/40) in tRNA = pseudouridine(38/39/40) in tRNA. In terms of biological role, formation of pseudouridine at positions 38, 39 and 40 in the anticodon stem and loop of transfer RNAs. This is tRNA pseudouridine synthase A from Maricaulis maris (strain MCS10) (Caulobacter maris).